A 91-amino-acid chain; its full sequence is Small ribosomal subunit protein uS17 (91 aa).

It belongs to the universal ribosomal protein uS17 family. Part of the 30S ribosomal subunit.

Its function is as follows. One of the primary rRNA binding proteins, it binds specifically to the 5'-end of 16S ribosomal RNA. The polypeptide is Small ribosomal subunit protein uS17 (Acidithiobacillus ferrooxidans (strain ATCC 23270 / DSM 14882 / CIP 104768 / NCIMB 8455) (Ferrobacillus ferrooxidans (strain ATCC 23270))).